The chain runs to 761 residues: Mitochondrial intermediate peptidase 1 (761 aa).

H530 is a binding site for Zn(2+). E531 is an active-site residue. H534 and H537 together coordinate Zn(2+).

This sequence belongs to the peptidase M3 family. Requires Zn(2+) as cofactor.

The protein resides in the mitochondrion matrix. The enzyme catalyses Release of an N-terminal octapeptide as second stage of processing of some proteins imported into the mitochondrion.. Functionally, cleaves proteins, imported into the mitochondrion, to their mature size. While most mitochondrial precursor proteins are processed to the mature form in one step by mitochondrial processing peptidase (MPP), the sequential cleavage by MIP of an octapeptide after initial processing by MPP is a required step for a subgroup of nuclear-encoded precursor proteins destined for the matrix or the inner membrane. The chain is Mitochondrial intermediate peptidase 1 (OCT1) from Cryptococcus neoformans var. neoformans serotype D (strain B-3501A) (Filobasidiella neoformans).